Reading from the N-terminus, the 80-residue chain is MKLTCMMIVAVLFLTAWTFATADDPRNRLENFFSKTQHEMKNPEASKLNKRCIAESEPCNIITQNCCDGKCLFFCIQIPE.

The signal sequence occupies residues M1 to A22. A propeptide spanning residues D23 to N49 is cleaved from the precursor. Cystine bridges form between C52/C67, C59/C71, and C66/C75.

The protein belongs to the conotoxin O1 superfamily. As to expression, expressed by the venom duct.

It localises to the secreted. The protein is Conotoxin PnMKLT1-0121 of Conus pennaceus (Feathered cone).